The following is a 310-amino-acid chain: Putative HTH-type transcriptional regulatory protein YN1551_1579 (310 aa).

The HTH cro/C1-type domain occupies 125–180 (LKHKREEMGYSIGDVAKFLGVSRKAIYDYEKGDSDVSLEVAEKLIDLFGDDIIGDV). A DNA-binding region (H-T-H motif) is located at residues 136–155 (IGDVAKFLGVSRKAIYDYEK).

This is Putative HTH-type transcriptional regulatory protein YN1551_1579 from Saccharolobus islandicus (strain Y.N.15.51 / Yellowstone #2) (Sulfolobus islandicus).